The chain runs to 306 residues: Pyridoxal 5'-phosphate synthase subunit SNZERR (306 aa).

Aspartate 34 serves as a coordination point for D-ribose 5-phosphate. The Schiff-base intermediate with D-ribose 5-phosphate role is filled by lysine 91. Position 163 (glycine 163) interacts with D-ribose 5-phosphate. Arginine 175 lines the D-glyceraldehyde 3-phosphate pocket. Residues glycine 224 and 245–246 contribute to the D-ribose 5-phosphate site; that span reads GS.

Belongs to the PdxS/SNZ family.

It catalyses the reaction aldehydo-D-ribose 5-phosphate + D-glyceraldehyde 3-phosphate + L-glutamine = pyridoxal 5'-phosphate + L-glutamate + phosphate + 3 H2O + H(+). The protein operates within cofactor biosynthesis; pyridoxal 5'-phosphate biosynthesis. Its function is as follows. Catalyzes the formation of pyridoxal 5'-phosphate from ribose 5-phosphate (RBP), glyceraldehyde 3-phosphate (G3P) and ammonia. The ammonia is provided by PDX2. Can also use ribulose 5-phosphate and dihydroxyacetone phosphate as substrates, resulting from enzyme-catalyzed isomerization of RBP and G3P, respectively. Also plays an indirect role in resistance to singlet oxygen-generating photosensitizers. The protein is Pyridoxal 5'-phosphate synthase subunit SNZERR (SNZERR) of Suberites domuncula (Sponge).